The following is a 100-amino-acid chain: NADH-quinone oxidoreductase subunit K (100 aa).

Helical transmembrane passes span 2-22 (VTLN…LVGV), 28-48 (LLML…GLVA), and 63-83 (FFII…LILW).

Belongs to the complex I subunit 4L family. In terms of assembly, NDH-1 is composed of 14 different subunits. Subunits NuoA, H, J, K, L, M, N constitute the membrane sector of the complex.

The protein resides in the cell inner membrane. The catalysed reaction is a quinone + NADH + 5 H(+)(in) = a quinol + NAD(+) + 4 H(+)(out). NDH-1 shuttles electrons from NADH, via FMN and iron-sulfur (Fe-S) centers, to quinones in the respiratory chain. The immediate electron acceptor for the enzyme in this species is believed to be ubiquinone. Couples the redox reaction to proton translocation (for every two electrons transferred, four hydrogen ions are translocated across the cytoplasmic membrane), and thus conserves the redox energy in a proton gradient. The protein is NADH-quinone oxidoreductase subunit K of Wolinella succinogenes (strain ATCC 29543 / DSM 1740 / CCUG 13145 / JCM 31913 / LMG 7466 / NCTC 11488 / FDC 602W) (Vibrio succinogenes).